Consider the following 143-residue polypeptide: Actinoxanthin (143 aa).

Residues 1-33 form the signal peptide; it reads MSLRHMSRRASRFGVVAVASIGLAAAAQSVAFA. 2 disulfides stabilise this stretch: Cys-69–Cys-78 and Cys-119–Cys-124.

This sequence belongs to the neocarzinostatin family.

Functionally, binds non-covalently to a chromophore which is the cytotoxic and mutagenic component of the antibiotic. The chromophore binds to DNA as a weak intercalator and causes single- and double-strand breaks. This Streptomyces globisporus protein is Actinoxanthin (axnA).